The chain runs to 116 residues: MNTVVDTPELMVFTDSAAMKVKELIEEEGNPELKLRVFVSGGGCSGFQYGFTFDEEVNEDDTAFEKNGVTLLVDPMSYQYLVGAEIDYSEGLEGSQFVIRNPNATSTCGCGSSFSA.

Cys-44, Cys-108, and Cys-110 together coordinate iron-sulfur cluster.

Belongs to the HesB/IscA family. In terms of assembly, homodimer. It depends on iron-sulfur cluster as a cofactor.

Functionally, required for insertion of 4Fe-4S clusters. The chain is Putative iron-sulfur cluster insertion protein ErpA from Aromatoleum aromaticum (strain DSM 19018 / LMG 30748 / EbN1) (Azoarcus sp. (strain EbN1)).